A 218-amino-acid chain; its full sequence is Small ribosomal subunit protein uS3c (218 aa).

The KH type-2 domain maps to 43 to 118; the sequence is IKNYVQKNMK…KLNISITRIE (76 aa).

It belongs to the universal ribosomal protein uS3 family. As to quaternary structure, part of the 30S ribosomal subunit.

The protein resides in the plastid. The protein localises to the chloroplast. The protein is Small ribosomal subunit protein uS3c (rps3) of Populus trichocarpa (Western balsam poplar).